A 639-amino-acid polypeptide reads, in one-letter code: ADP-ribosylation factor-binding protein GGA1 (639 aa).

The residue at position 1 (methionine 1) is an N-acetylmethionine. In terms of domain architecture, VHS spans 17-147 (ATNPLNKELD…MLKKQGIVKS (131 aa)). Residues 114-274 (KILELLYSWT…RLASDTEDND (161 aa)) form an interaction with ARF3 region. The region spanning 171–299 (DEEKSKMLAR…VINLYKQLVR (129 aa)) is the GAT domain. At serine 185 the chain carries Phosphoserine. The interval 300 to 509 (GEEVNGDATA…ITVPLESIKP (210 aa)) is unstructured hinge. Disordered regions lie at residues 320-421 (LDLS…SGLD) and 434-492 (SLPP…QPVP). Position 355 is a phosphoserine; by CK2 (serine 355). An Autoinhibitory motif is present at residues 358–362 (DDELM). A compositionally biased stretch (polar residues) spans 381 to 390 (GWNSFQSSDA). Residue serine 418 is modified to Phosphoserine. The span at 462 to 480 (SSSCSSPSSSATSLLHTVS) shows a compositional bias: low complexity. Residues 481–490 (PEPPRPPQQP) are compositionally biased toward pro residues. The GAE domain occupies 510 to 631 (SNILPVTVYD…NEMGDVDQFP (122 aa)).

Belongs to the GGA protein family. As to quaternary structure, monomer. Interacts with GGA2 and GGA3. Binds to clathrin and activated ARFs, including ARF1, ARF5 and ARF6. Interacts with RABEP1. Interacts with RABGEF1. Interacts with the type-I membrane proteins LRP3, M6PR/CD-MPR and IGF2R/CI-MPR. Interacts (via N-terminal VHS domain) with SORL1/sorLA and SORT1 (via C-terminal cytosolic domain). Interacts with EPN4. Interacts with CCDC91. Interacts with HEATR5B/p200a. Interacts with SYNRG/gamma-synergin. Interacts (via GAE doamin) with NECAP1 and NECAP2. Interacts (via GAE domain) with AFTPH/aftiphilin. Interacts with TSG101 and UBC. Interacts with RNF11. Interacts (via VHS domain) with BACE1 (via DXXLL motif); the interaction highly increases when BACE1 is phosphorylated at 'Ser-498'. Interacts with CNST. Interacts with ADRA2B. Interacts with ARL3; the interaction recruits, in collaboration with RABEP1, PKD1:PKD2 complex to trans-Golgi network and is required for ciliary targeting. Post-translationally, phosphorylated by CK2 and dephosphorylated by PP2A. Phosphorylation of GGA1 allows the internal DXXLL motif to bind the VHS domain and to inhibit the recognition of cargo signals. In terms of processing, ubiquitinated. Ubiquitously expressed.

The protein resides in the golgi apparatus. It localises to the trans-Golgi network membrane. It is found in the endosome membrane. The protein localises to the early endosome membrane. Plays a role in protein sorting and trafficking between the trans-Golgi network (TGN) and endosomes. Mediates the ARF-dependent recruitment of clathrin to the TGN and binds ubiquitinated proteins and membrane cargo molecules with a cytosolic acidic cluster-dileucine (DXXLL) motif. Mediates export of the GPCR receptor ADRA2B to the cell surface. Required for targeting PKD1:PKD2 complex from the trans-Golgi network to the cilium membrane. Regulates retrograde transport of proteins such as phosphorylated form of BACE1 from endosomes to the trans-Golgi network. This chain is ADP-ribosylation factor-binding protein GGA1 (GGA1), found in Homo sapiens (Human).